Here is a 1090-residue protein sequence, read N- to C-terminus: UPF0507 protein SCRG_01893 (1090 aa).

The region spanning 289–436 is the VPS9 domain; the sequence is FSVNQLLTDF…FEDFNKNTGN (148 aa).

Belongs to the UPF0507 family.

The chain is UPF0507 protein SCRG_01893 from Saccharomyces cerevisiae (strain RM11-1a) (Baker's yeast).